The chain runs to 301 residues: Haloalkane dehalogenase (301 aa).

The 238-residue stretch at 47-284 (PPIVLLHGEP…INASHFIQED (238 aa)) folds into the AB hydrolase-1 domain. Catalysis depends on Asp123, which acts as the Nucleophile. Residue Asp250 is the Proton donor of the active site. His279 (proton acceptor) is an active-site residue.

Belongs to the haloalkane dehalogenase family. Type 1 subfamily. Monomer.

It catalyses the reaction 1-haloalkane + H2O = a halide anion + a primary alcohol + H(+). Its function is as follows. Catalyzes hydrolytic cleavage of carbon-halogen bonds in halogenated aliphatic compounds, leading to the formation of the corresponding primary alcohols, halide ions and protons. This chain is Haloalkane dehalogenase, found in Mycolicibacterium paratuberculosis (strain ATCC BAA-968 / K-10) (Mycobacterium paratuberculosis).